The primary structure comprises 460 residues: ATP synthase subunit beta (460 aa).

Residue 150-157 (GGAGVGKT) participates in ATP binding.

The protein belongs to the ATPase alpha/beta chains family. F-type ATPases have 2 components, CF(1) - the catalytic core - and CF(0) - the membrane proton channel. CF(1) has five subunits: alpha(3), beta(3), gamma(1), delta(1), epsilon(1). CF(0) has three main subunits: a(1), b(2) and c(9-12). The alpha and beta chains form an alternating ring which encloses part of the gamma chain. CF(1) is attached to CF(0) by a central stalk formed by the gamma and epsilon chains, while a peripheral stalk is formed by the delta and b chains.

Its subcellular location is the cell inner membrane. The enzyme catalyses ATP + H2O + 4 H(+)(in) = ADP + phosphate + 5 H(+)(out). Functionally, produces ATP from ADP in the presence of a proton gradient across the membrane. The catalytic sites are hosted primarily by the beta subunits. In Salmonella paratyphi A (strain ATCC 9150 / SARB42), this protein is ATP synthase subunit beta.